A 35-amino-acid polypeptide reads, in one-letter code: Photosystem II reaction center protein T (35 aa).

A helical transmembrane segment spans residues 3–23 (ALVYTFLLISTLGIIFFAIFF).

This sequence belongs to the PsbT family. In terms of assembly, PSII is composed of 1 copy each of membrane proteins PsbA, PsbB, PsbC, PsbD, PsbE, PsbF, PsbH, PsbI, PsbJ, PsbK, PsbL, PsbM, PsbT, PsbY, PsbZ, Psb30/Ycf12, at least 3 peripheral proteins of the oxygen-evolving complex and a large number of cofactors. It forms dimeric complexes.

The protein resides in the plastid. It is found in the chloroplast thylakoid membrane. In terms of biological role, found at the monomer-monomer interface of the photosystem II (PS II) dimer, plays a role in assembly and dimerization of PSII. PSII is a light-driven water plastoquinone oxidoreductase, using light energy to abstract electrons from H(2)O, generating a proton gradient subsequently used for ATP formation. In Aristolochia macrophylla (Dutchman's pipe vine), this protein is Photosystem II reaction center protein T.